Consider the following 195-residue polypeptide: dITP/XTP pyrophosphatase (195 aa).

8 to 13 (SGNAGK) serves as a coordination point for substrate. E38 and D67 together coordinate Mg(2+). The active-site Proton acceptor is the D67. Residues S68, 146 to 149 (FGYD), K169, and 174 to 175 (HR) contribute to the substrate site.

The protein belongs to the HAM1 NTPase family. As to quaternary structure, homodimer. Requires Mg(2+) as cofactor.

The enzyme catalyses XTP + H2O = XMP + diphosphate + H(+). It carries out the reaction dITP + H2O = dIMP + diphosphate + H(+). The catalysed reaction is ITP + H2O = IMP + diphosphate + H(+). In terms of biological role, pyrophosphatase that catalyzes the hydrolysis of nucleoside triphosphates to their monophosphate derivatives, with a high preference for the non-canonical purine nucleotides XTP (xanthosine triphosphate), dITP (deoxyinosine triphosphate) and ITP. Seems to function as a house-cleaning enzyme that removes non-canonical purine nucleotides from the nucleotide pool, thus preventing their incorporation into DNA/RNA and avoiding chromosomal lesions. The chain is dITP/XTP pyrophosphatase from Parasynechococcus marenigrum (strain WH8102).